Reading from the N-terminus, the 521-residue chain is MEEVMISPVEHDPQGQVKQQQAAGVGILLQIMMLVLSFVLGHVLRRHRFHYLPEASGSLLIGLIVGILANISDTETSIRTWFNFHEEFFFLFLLPPIIFQSGFSLQPKPFFSNFGAIVTFAIIGTFVASVVTGGLVYLGGSMYLMYKLPFVECLMFGALISATDPVTVLSIFQDVGTDVNLYALVFGESVLNDAMAISLYRTMSLVNRQSSSGEHFFMVVIRFFETFAGSMSAGVGVGFTSALLFKYAGLDTENLQNLECCLFVLFPYFSYMLAEGVGLSGIVSILFTGIVMKRYTFSNLSEASQSFVSSFFHLISSLAETFTFIYMGFDIAMEQHSWSHVGFILFSILFIGVARAVNVFGCAYLVNLFRQENQKIPMKHQKALWYSGLRGAMAFALALQSLHDLPEGHGQIIFTATTTIVVVTVLLIGGSTGKMLEALEVVGDDLDDSMSEGFEESDHQYVPPPFSIGASSDEDTSSSGSRFKMKLKEFHKTTTSFTALDKNFLTPFFTTNSGDGDGDGE.

Residues 1–23 are Cytoplasmic-facing; it reads MEEVMISPVEHDPQGQVKQQQAA. A helical membrane pass occupies residues 24–44; it reads GVGILLQIMMLVLSFVLGHVL. Residues 45–48 lie on the Lumenal side of the membrane; it reads RRHR. The helical transmembrane segment at 49-69 threads the bilayer; that stretch reads FHYLPEASGSLLIGLIVGILA. Over 70–86 the chain is Cytoplasmic; that stretch reads NISDTETSIRTWFNFHE. The helical intramembrane region spans 87–107; that stretch reads EFFFLFLLPPIIFQSGFSLQP. Over 108–115 the chain is Cytoplasmic; it reads KPFFSNFG. The chain crosses the membrane as a helical span at residues 116–136; it reads AIVTFAIIGTFVASVVTGGLV. Over 137–141 the chain is Lumenal; that stretch reads YLGGS. 2 intramembrane regions (helical) span residues 142–162 and 166–186; these read MYLM…LISA and VTVL…ALVF. Residues 187 to 222 are Lumenal-facing; it reads GESVLNDAMAISLYRTMSLVNRQSSSGEHFFMVVIR. A helical transmembrane segment spans residues 223–243; it reads FFETFAGSMSAGVGVGFTSAL. Topologically, residues 244–271 are cytoplasmic; that stretch reads LFKYAGLDTENLQNLECCLFVLFPYFSY. Residues 272–292 form a helical membrane-spanning segment; the sequence is MLAEGVGLSGIVSILFTGIVM. The Lumenal portion of the chain corresponds to 293–310; sequence KRYTFSNLSEASQSFVSS. N-linked (GlcNAc...) asparagine glycosylation is present at Asn299. The helical transmembrane segment at 311–331 threads the bilayer; it reads FFHLISSLAETFTFIYMGFDI. Residues 332–340 lie on the Cytoplasmic side of the membrane; sequence AMEQHSWSH. Residues 341–361 form a helical membrane-spanning segment; it reads VGFILFSILFIGVARAVNVFG. The Lumenal segment spans residues 362–382; it reads CAYLVNLFRQENQKIPMKHQK. A helical membrane pass occupies residues 383–402; sequence ALWYSGLRGAMAFALALQSL. Over 403-411 the chain is Cytoplasmic; it reads HDLPEGHGQ. A helical transmembrane segment spans residues 412-432; the sequence is IIFTATTTIVVVTVLLIGGST. At 433-521 the chain is on the lumenal side; it reads GKMLEALEVV…NSGDGDGDGE (89 aa). Residues 453 to 480 are disordered; the sequence is GFEESDHQYVPPPFSIGASSDEDTSSSG. Residues 467-480 are compositionally biased toward low complexity; sequence SIGASSDEDTSSSG.

This sequence belongs to the monovalent cation:proton antiporter 1 (CPA1) transporter (TC 2.A.36) family. Expressed in roots, leaves, stems, flowers and siliques. Detected at low levels in roots and shoots.

The protein localises to the endosome membrane. It is found in the golgi apparatus. It localises to the trans-Golgi network membrane. Its subcellular location is the golgi stack membrane. It catalyses the reaction Na(+)(in) + H(+)(out) = Na(+)(out) + H(+)(in). It carries out the reaction K(+)(in) + H(+)(out) = K(+)(out) + H(+)(in). Its function is as follows. Involved in trafficking to the vacuole. Required for cell proliferation and cell expansion, but not for cell differentiation. Acts in low affinity electroneutral exchange of protons for cations such as Na(+) or K(+) across membranes. May also exchange Li(+) and Cs(+) with a lower affinity. In Arabidopsis thaliana (Mouse-ear cress), this protein is Sodium/hydrogen exchanger 5 (NHX5).